The chain runs to 200 residues: MQIERPNVALIAGVDEVGRGPLVGDVVTAAVILDPSKPIAGLADSKKLTDKKRQALAIEIQEKALCYAYGRCSPTEIDELNILHATMLAMTRAVEGLSTQPEFVFIDGNRLPKLTMPAQAIVKGDSLVAEISAASILAKVARDNEMVELDKRHPEYGFAGHKGYPTKAHFAALEQYGAIKEHRKSFKPVQRVLAQAKGEA.

In terms of domain architecture, RNase H type-2 spans 9–198 (ALIAGVDEVG…VQRVLAQAKG (190 aa)). A divalent metal cation-binding residues include D15, E16, and D107.

Belongs to the RNase HII family. Mn(2+) serves as cofactor. It depends on Mg(2+) as a cofactor.

It localises to the cytoplasm. It carries out the reaction Endonucleolytic cleavage to 5'-phosphomonoester.. Functionally, endonuclease that specifically degrades the RNA of RNA-DNA hybrids. This is Ribonuclease HII from Pseudoalteromonas translucida (strain TAC 125).